Consider the following 757-residue polypeptide: MSSSFLSSTAFFLLLCLGFCHVSSSSSDQGTYIVHMAKSQMPSSFDLHSNWYDSSLRSISDSAELLYTYENAIHGFSTRLTQEEADSLMTQPGVISVLPEHRYELHTTRTPLFLGLDEHTADLFPEAGSYSDVVVGVLDTGVWPESKSYSDEGFGPIPSSWKGGCEAGTNFTASLCNRKLIGARFFARGYESTMGPIDESKESRSPRDDDGHGTHTSSTAAGSVVEGASLLGYASGTARGMAPRARVAVYKVCWLGGCFSSDILAAIDKAIADNVNVLSMSLGGGMSDYYRDGVAIGAFAAMERGILVSCSAGNAGPSSSSLSNVAPWITTVGAGTLDRDFPALAILGNGKNFTGVSLFKGEALPDKLLPFIYAGNASNATNGNLCMTGTLIPEKVKGKIVMCDRGINARVQKGDVVKAAGGVGMILANTAANGEELVADAHLLPATTVGEKAGDIIRHYVTTDPNPTASISILGTVVGVKPSPVVAAFSSRGPNSITPNILKPDLIAPGVNILAAWTGAAGPTGLASDSRRVEFNIISGTSMSCPHVSGLAALLKSVHPEWSPAAIRSALMTTAYKTYKDGKPLLDIATGKPSTPFDHGAGHVSPTTATNPGLIYDLTTEDYLGFLCALNYTSPQIRSVSRRNYTCDPSKSYSVADLNYPSFAVNVDGVGAYKYTRTVTSVGGAGTYSVKVTSETTGVKISVEPAVLNFKEANEKKSYTVTFTVDSSKPSGSNSFGSIEWSDGKHVVGSPVAISWT.

The first 24 residues, 1-24 (MSSSFLSSTAFFLLLCLGFCHVSS), serve as a signal peptide directing secretion. A propeptide spanning residues 25–106 (SSSDQGTYIV…VLPEHRYELH (82 aa)) is cleaved from the precursor. The region spanning 31-106 (TYIVHMAKSQ…VLPEHRYELH (76 aa)) is the Inhibitor I9 domain. The region spanning 102 to 610 (RYELHTTRTP…AGHVSPTTAT (509 aa)) is the Peptidase S8 domain. Asp139 (charge relay system) is an active-site residue. A glycan (N-linked (GlcNAc...) asparagine) is linked at Asn170. A disordered region spans residues 196–219 (PIDESKESRSPRDDDGHGTHTSST). Residues 198–213 (DESKESRSPRDDDGHG) are compositionally biased toward basic and acidic residues. The active-site Charge relay system is His212. 3 N-linked (GlcNAc...) asparagine glycosylation sites follow: Asn352, Asn376, and Asn379. The Charge relay system role is filled by Ser542. N-linked (GlcNAc...) asparagine glycans are attached at residues Asn631 and Asn644.

This sequence belongs to the peptidase S8 family. Expressed in immature siliques and at lower levels in stems and flowers. Widely expressed at low levels.

The protein resides in the secreted. It is found in the cell wall. Activated by calcium. Inhibited by the serine protease inhibitors 4-(2-aminoethyl)benzenesulphonyl fluoride (AEBSF), PMSF, di-isopropyl phosphofluoridate (DFP) and soybean trypsin inhibitor (SBTI). Not inhibited by benzamidine or iodoacetamide. Leupeptin and pepstatin A have a minor inhibitory action. Functionally, serine protease. Has a substrate preference for the hydrophobic residues Phe and Ala and the basic residue Asp in the P1 position, and for Asp, Leu or Ala in the P1' position. Essential for mucilage release from seed coats. Triggers the accumulation and/or activation of cell wall modifying enzymes necessary either for the loosening of the outer primary cell wall, or to facilitate swelling of the mucilage. This Arabidopsis thaliana (Mouse-ear cress) protein is Subtilisin-like protease SBT1.7.